We begin with the raw amino-acid sequence, 524 residues long: Tyrosine-protein kinase HCK (524 aa).

Disordered stretches follow at residues 1-20 (MGGR…GRVP) and 35-71 (KASK…LPPG). Gly-2 carries the N-myristoyl glycine lipid modification. The S-palmitoyl cysteine moiety is linked to residue Gly-3. Phosphotyrosine; by autocatalysis is present on Tyr-50. Residues 76–136 (SEDTIVVALY…PSNYVARVNS (61 aa)) enclose the SH3 domain. In terms of domain architecture, SH2 spans 142-239 (WFFKGISRKD…GLCQKLSVPC (98 aa)). Thr-200 bears the Phosphothreonine mark. Tyr-207 is subject to Phosphotyrosine. One can recognise a Protein kinase domain in the interval 260–513 (LQMEKKLGAG…YIQSVLDDFY (254 aa)). ATP-binding positions include 266–274 (LGAGQFGEV) and Lys-288. Asp-379 (proton acceptor) is an active-site residue. The residue at position 409 (Tyr-409) is a Phosphotyrosine; by autocatalysis. Ser-460 is modified (phosphoserine). Tyr-520 carries the phosphotyrosine modification.

This sequence belongs to the protein kinase superfamily. Tyr protein kinase family. SRC subfamily. As to quaternary structure, interacts with ADAM15. Interacts with FASLG. Interacts with ARRB1 and ARRB2. Interacts with FCGR1A; the interaction may be indirect. Interacts with IL6ST. Interacts (via SH3 domain) with ELMO1. Interacts (via SH3 domain) with TP73. Interacts with YAP1. Interacts with ABL1 and ITGB1, and thereby recruits ABL1 to activated ITGB1. Interacts (via SH2 domain) with FLT3 (tyrosine phosphorylated). Interacts with CBL. Interacts with VAV1, WAS and RAPGEF1. Interacts (via SH3 domain) with WDCP. Phosphorylated on several tyrosine residues. Autophosphorylated. Becomes rapidly phosphorylated upon activation of the immunoglobulin receptors FCGR1A and FCGR2A. Phosphorylation at Tyr-409 increases kinase activity. Phosphorylation at Tyr-520 inhibits kinase activity. Kinase activity is not required for phosphorylation at Tyr-520, suggesting that this site may be a target of other kinases. Post-translationally, ubiquitinated by CBL, leading to its degradation via the proteasome. In terms of processing, isoform 2 palmitoylation at position 2 requires prior myristoylation. Palmitoylation at position 3 is required for caveolar localization of isoform 2. In terms of tissue distribution, expressed strongly in spleen and at very low levels in thymus.

The protein resides in the cytoplasmic vesicle. The protein localises to the secretory vesicle. Its subcellular location is the cytoplasm. It localises to the cytosol. It is found in the membrane. The protein resides in the caveola. The protein localises to the lysosome. Its subcellular location is the cell projection. It localises to the podosome membrane. It is found in the cell membrane. The protein resides in the cell junction. The protein localises to the focal adhesion. Its subcellular location is the cytoskeleton. It localises to the golgi apparatus. It is found in the nucleus. It carries out the reaction L-tyrosyl-[protein] + ATP = O-phospho-L-tyrosyl-[protein] + ADP + H(+). Its activity is regulated as follows. Subject to autoinhibition, mediated by intramolecular interactions involving the SH2 and SH3 domains. Kinase activity is also regulated by phosphorylation at regulatory tyrosine residues. Phosphorylation at Tyr-409 is required for optimal activity. Phosphorylation at Tyr-520 inhibits kinase activity. Non-receptor tyrosine-protein kinase found in hematopoietic cells that transmits signals from cell surface receptors and plays an important role in the regulation of innate immune responses, including neutrophil, monocyte, macrophage and mast cell functions, phagocytosis, cell survival and proliferation, cell adhesion and migration. Acts downstream of receptors that bind the Fc region of immunoglobulins, such as FCGR1A and FCGR2A, but also CSF3R, PLAUR, the receptors for IFNG, IL2, IL6 and IL8, and integrins, such as ITGB1 and ITGB2. During the phagocytic process, mediates mobilization of secretory lysosomes, degranulation, and activation of NADPH oxidase to bring about the respiratory burst. Plays a role in the release of inflammatory molecules. Promotes reorganization of the actin cytoskeleton and actin polymerization, formation of podosomes and cell protrusions. Inhibits TP73-mediated transcription activation and TP73-mediated apoptosis. Phosphorylates CBL in response to activation of immunoglobulin gamma Fc region receptors. Phosphorylates ADAM15, BCR, ELMO1, FCGR2A, GAB1, GAB2, RAPGEF1, STAT5B, TP73, VAV1 and WAS. This Rattus norvegicus (Rat) protein is Tyrosine-protein kinase HCK (Hck).